The primary structure comprises 186 residues: Calcium load-activated calcium channel homolog (186 aa).

Residues 1-6 (MLGDCL) lie on the Cytoplasmic side of the membrane. A helical membrane pass occupies residues 7–27 (LIIAIAFGTALAGEGITWLLV). Topologically, residues 28–87 (YRSDHYKRLKADMDKKTKKLEKKKQEVGDTNDKNIKRKLEREEERLKATNRDMSMFKMKS) are lumenal. A coiled-coil region spans residues 30-86 (SDHYKRLKADMDKKTKKLEKKKQEVGDTNDKNIKRKLEREEERLKATNRDMSMFKMK). Residues 88 to 108 (MFAIGLAFTALLSTFNSIFEG) form a helical membrane-spanning segment. Over 109–134 (RVVAKLPFYPIGFIQGLSHRNLIGED) the chain is Cytoplasmic. Positions 135-151 (MTDCSFIFLYILCTMTV) form an intramembrane region, pore-forming. The Cytoplasmic segment spans residues 152–186 (RQNLQKILGFAPSRAMARQQSSPWAPPNSQMNYLR).

This sequence belongs to the TMCO1 family. Homodimer and homotetramer.

The protein resides in the endoplasmic reticulum membrane. Functionally, calcium-selective channel required to prevent calcium stores from overfilling. The protein is Calcium load-activated calcium channel homolog of Caenorhabditis elegans.